Reading from the N-terminus, the 594-residue chain is Fidgetin-like protein 1 (594 aa).

2 disordered regions span residues 1–79 (MYSP…DDEL) and 239–261 (QSIG…KRCS). The span at 56–73 (PSDSAQQQPPFKSRSQQN) shows a compositional bias: polar residues. Residues Ala-319 and 359-364 (GTGKTM) contribute to the ATP site.

It belongs to the AAA ATPase family. As to quaternary structure, hexamer. The cofactor is Mg(2+). Expressed in germ cells.

It localises to the nucleus. The catalysed reaction is ATP + H2O = ADP + phosphate + H(+). In terms of biological role, has a role in spindle assembly which acts in the progression through mitosis during embryogenesis. Required for fertility. This is Fidgetin-like protein 1 (figl-1) from Caenorhabditis elegans.